We begin with the raw amino-acid sequence, 131 residues long: Holo-[acyl-carrier-protein] synthase (131 aa).

The Mg(2+) site is built by Asp-8 and Glu-59.

This sequence belongs to the P-Pant transferase superfamily. AcpS family. Mg(2+) is required as a cofactor.

Its subcellular location is the cytoplasm. The catalysed reaction is apo-[ACP] + CoA = holo-[ACP] + adenosine 3',5'-bisphosphate + H(+). In terms of biological role, transfers the 4'-phosphopantetheine moiety from coenzyme A to a Ser of acyl-carrier-protein. This chain is Holo-[acyl-carrier-protein] synthase, found in Rickettsia africae (strain ESF-5).